A 370-amino-acid chain; its full sequence is GTPase Obg (370 aa).

The Obg domain occupies 1-159 (MKFIDEARIE…RMLRLELKVL (159 aa)). Residues 160–334 (ADVGLLGMPN…LCYAIYDYLA (175 aa)) enclose the OBG-type G domain. Residues 166 to 173 (GMPNAGKS), 191 to 195 (FTTLA), 213 to 216 (DIPG), 284 to 287 (NKLD), and 315 to 317 (SAL) each bind GTP. Residues Ser-173 and Thr-193 each contribute to the Mg(2+) site. A disordered region spans residues 344–370 (EEEDLATDVRFRDAPPADGGATPGGDA).

Belongs to the TRAFAC class OBG-HflX-like GTPase superfamily. OBG GTPase family. In terms of assembly, monomer. It depends on Mg(2+) as a cofactor.

Its subcellular location is the cytoplasm. In terms of biological role, an essential GTPase which binds GTP, GDP and possibly (p)ppGpp with moderate affinity, with high nucleotide exchange rates and a fairly low GTP hydrolysis rate. Plays a role in control of the cell cycle, stress response, ribosome biogenesis and in those bacteria that undergo differentiation, in morphogenesis control. The chain is GTPase Obg from Burkholderia ambifaria (strain MC40-6).